Reading from the N-terminus, the 367-residue chain is MAQVINTNYLSLVTQNNLNRSQSALGNAIERLSSGMRINSAKDDAAGQAIANRFTSNINGLTQASRNANDGISVSQTTEGALNEINNNLQRIRELTVQAKNGTNSNSDINSIQNEVNQRLDEINRVSEQTQFNGVKVLSGEKSKMTIQVGTNDNEVIEFNLDKIDNDTLGVASDKLFDAKTEKKGVTAAGDAIDANALGISGSKKYVTGISVKEYKVDGKVSSDKVVLNDGSDDYIVSKSDFTLKSGTTTGEVEFTGSKTTKFTADAGKDVKVLNVKDDALATLDNAISKVDESRSKLGAIQNRFQSTINNLNNTVNNLSASRSRILDADYATEVSNMSKNQILQQAGTAVLAQANQVPQTVLSLLR.

Belongs to the bacterial flagellin family.

The protein resides in the secreted. It is found in the bacterial flagellum. Flagellin is the subunit protein which polymerizes to form the filaments of bacterial flagella. The chain is Flagellin 2 (fliC2) from Proteus mirabilis.